The chain runs to 153 residues: Interleukin-2 (153 aa).

The N-terminal stretch at 1-20 (MYRMQLLSCIALSLALVTNS) is a signal peptide. Thr-23 is a glycosylation site (O-linked (GalNAc...) threonine). A disulfide bridge links Cys-78 with Cys-125.

This sequence belongs to the IL-2 family.

It is found in the secreted. Its function is as follows. Cytokine produced by activated CD4-positive helper T-cells and to a lesser extend activated CD8-positive T-cells and natural killer (NK) cells that plays pivotal roles in the immune response and tolerance. Binds to a receptor complex composed of either the high-affinity trimeric IL-2R (IL2RA/CD25, IL2RB/CD122 and IL2RG/CD132) or the low-affinity dimeric IL-2R (IL2RB and IL2RG). Interaction with the receptor leads to oligomerization and conformation changes in the IL-2R subunits resulting in downstream signaling starting with phosphorylation of JAK1 and JAK3. In turn, JAK1 and JAK3 phosphorylate the receptor to form a docking site leading to the phosphorylation of several substrates including STAT5. This process leads to activation of several pathways including STAT, phosphoinositide-3-kinase/PI3K and mitogen-activated protein kinase/MAPK pathways. Functions as a T-cell growth factor and can increase NK-cell cytolytic activity as well. Promotes strong proliferation of activated B-cells and subsequently immunoglobulin production. Plays a pivotal role in regulating the adaptive immune system by controlling the survival and proliferation of regulatory T-cells, which are required for the maintenance of immune tolerance. Moreover, participates in the differentiation and homeostasis of effector T-cell subsets, including Th1, Th2, Th17 as well as memory CD8-positive T-cells. The polypeptide is Interleukin-2 (IL2) (Homo sapiens (Human)).